We begin with the raw amino-acid sequence, 218 residues long: Probable septum site-determining protein MinC (218 aa).

It belongs to the MinC family. In terms of assembly, interacts with MinD and FtsZ.

In terms of biological role, cell division inhibitor that blocks the formation of polar Z ring septums. Rapidly oscillates between the poles of the cell to destabilize FtsZ filaments that have formed before they mature into polar Z rings. Prevents FtsZ polymerization. The sequence is that of Probable septum site-determining protein MinC from Moorella thermoacetica (strain ATCC 39073 / JCM 9320).